The primary structure comprises 100 residues: Small ribosomal subunit protein uS14 (100 aa).

It belongs to the universal ribosomal protein uS14 family. As to quaternary structure, part of the 30S ribosomal subunit. Contacts proteins S3 and S10.

Functionally, binds 16S rRNA, required for the assembly of 30S particles and may also be responsible for determining the conformation of the 16S rRNA at the A site. The chain is Small ribosomal subunit protein uS14 from Acaryochloris marina (strain MBIC 11017).